The sequence spans 226 residues: MPFDPRTTPLTAVEARVLATLMEKARTVPDSYPLTLNALVTGCNQKSSRDPVMEVSEGEAQEALDSLRLRTMSVQISSARATRWEHNFPRGVGVPDQSAVLLSLLMLRGPQTAGELRINSERWHRFADISSVEAFLEELRERSEEKGGPLVVLLPRAPGAREQRWAHLLCGPVDVNAMAQPPAAAGARGDALAQRVVDLEAQVQQLQARLAHVYAQLGLEEPGQSS.

The protein belongs to the UPF0502 family.

The chain is UPF0502 protein Daci_5373 from Delftia acidovorans (strain DSM 14801 / SPH-1).